Reading from the N-terminus, the 348-residue chain is UDP-glucose 4-epimerase (348 aa).

Residue threonine 125 coordinates substrate. Tyrosine 149 serves as the catalytic Proton acceptor.

It belongs to the NAD(P)-dependent epimerase/dehydratase family. The cofactor is NAD(+).

The enzyme catalyses UDP-alpha-D-glucose = UDP-alpha-D-galactose. It functions in the pathway carbohydrate metabolism; galactose metabolism. The protein operates within glycan metabolism; exopolysaccharide biosynthesis. The chain is UDP-glucose 4-epimerase (exoB) from Azospirillum brasilense.